The chain runs to 78 residues: MSDIQTLSFEEAMRELEATVGKLETGEATLEDSIALYERGAALRAHCETRLREAEERVEKITLAANGQPSGTEPAEGL.

It belongs to the XseB family. In terms of assembly, heterooligomer composed of large and small subunits.

It is found in the cytoplasm. The enzyme catalyses Exonucleolytic cleavage in either 5'- to 3'- or 3'- to 5'-direction to yield nucleoside 5'-phosphates.. In terms of biological role, bidirectionally degrades single-stranded DNA into large acid-insoluble oligonucleotides, which are then degraded further into small acid-soluble oligonucleotides. This Paracoccus zeaxanthinifaciens protein is Exodeoxyribonuclease 7 small subunit.